The sequence spans 460 residues: Phosphomethylpyrimidine synthase (460 aa).

Substrate contacts are provided by residues Asn-80, Met-109, Tyr-139, His-175, 195–197, 236–239, and Glu-275; these read SRG and DSLR. A Zn(2+)-binding site is contributed by His-279. A substrate-binding site is contributed by Tyr-302. Residue His-343 participates in Zn(2+) binding. [4Fe-4S] cluster-binding residues include Cys-423, Cys-426, and Cys-431.

The protein belongs to the ThiC family. It depends on [4Fe-4S] cluster as a cofactor.

The catalysed reaction is 5-amino-1-(5-phospho-beta-D-ribosyl)imidazole + S-adenosyl-L-methionine = 4-amino-2-methyl-5-(phosphooxymethyl)pyrimidine + CO + 5'-deoxyadenosine + formate + L-methionine + 3 H(+). The protein operates within cofactor biosynthesis; thiamine diphosphate biosynthesis. Functionally, catalyzes the synthesis of the hydroxymethylpyrimidine phosphate (HMP-P) moiety of thiamine from aminoimidazole ribotide (AIR) in a radical S-adenosyl-L-methionine (SAM)-dependent reaction. This Rippkaea orientalis (strain PCC 8801 / RF-1) (Cyanothece sp. (strain PCC 8801)) protein is Phosphomethylpyrimidine synthase.